The primary structure comprises 398 residues: Bifunctional enzyme IspD/IspF (398 aa).

The interval 1–234 (MAKSQRTAVV…ARLAAQLGDI (234 aa)) is 2-C-methyl-D-erythritol 4-phosphate cytidylyltransferase. The interval 235–398 (RTGTGYDVHA…LPFNEKTWSV (164 aa)) is 2-C-methyl-D-erythritol 2,4-cyclodiphosphate synthase. 2 residues coordinate a divalent metal cation: aspartate 241 and histidine 243. 4-CDP-2-C-methyl-D-erythritol 2-phosphate contacts are provided by residues 241-243 (DVH) and 267-268 (HS). Histidine 275 contacts a divalent metal cation. 4-CDP-2-C-methyl-D-erythritol 2-phosphate-binding positions include 289-291 (DIG), 365-368 (TTSE), phenylalanine 372, and arginine 375.

This sequence in the N-terminal section; belongs to the IspD/TarI cytidylyltransferase family. IspD subfamily. In the C-terminal section; belongs to the IspF family. The cofactor is a divalent metal cation.

The catalysed reaction is 2-C-methyl-D-erythritol 4-phosphate + CTP + H(+) = 4-CDP-2-C-methyl-D-erythritol + diphosphate. It catalyses the reaction 4-CDP-2-C-methyl-D-erythritol 2-phosphate = 2-C-methyl-D-erythritol 2,4-cyclic diphosphate + CMP. The protein operates within isoprenoid biosynthesis; isopentenyl diphosphate biosynthesis via DXP pathway; isopentenyl diphosphate from 1-deoxy-D-xylulose 5-phosphate: step 2/6. It participates in isoprenoid biosynthesis; isopentenyl diphosphate biosynthesis via DXP pathway; isopentenyl diphosphate from 1-deoxy-D-xylulose 5-phosphate: step 4/6. In terms of biological role, bifunctional enzyme that catalyzes the formation of 4-diphosphocytidyl-2-C-methyl-D-erythritol from CTP and 2-C-methyl-D-erythritol 4-phosphate (MEP) (IspD), and catalyzes the conversion of 4-diphosphocytidyl-2-C-methyl-D-erythritol 2-phosphate (CDP-ME2P) to 2-C-methyl-D-erythritol 2,4-cyclodiphosphate (ME-CPP) with a corresponding release of cytidine 5-monophosphate (CMP) (IspF). The polypeptide is Bifunctional enzyme IspD/IspF (Bradyrhizobium diazoefficiens (strain JCM 10833 / BCRC 13528 / IAM 13628 / NBRC 14792 / USDA 110)).